We begin with the raw amino-acid sequence, 379 residues long: Heme chaperone HemW (379 aa).

Positions Met1–Asn232 constitute a Radical SAM core domain. Residue Tyr9 coordinates S-adenosyl-L-methionine. Residues Cys15, Cys19, and Cys22 each contribute to the [4Fe-4S] cluster site. Residues Gly60, Gly61–Thr62, Glu93, Gln120, Arg132, and Asp157 each bind S-adenosyl-L-methionine.

It belongs to the anaerobic coproporphyrinogen-III oxidase family. HemW subfamily. Homodimer.

The protein localises to the cytoplasm. The protein resides in the cell membrane. Functionally, could serve in the delivery of heme to a membrane-localized target protein. Binds one molecule of heme per monomer, possibly covalently; heme and Fe-S cluster binding are independent. Incubation with the reductant sodium dithionite increases binding. Does not have coproporphyrinogen III dehydrogenase activity in vitro, does not complement an E.coli hemN deletion in vivo. Binds 1 Fe-S cluster, it is probably [4Fe-4S]. The cluster is coordinated with 3 cysteines and an exchangeable S-adenosyl-L-methionine; only dimeric protein has the cluster. This Lactococcus lactis subsp. lactis (strain IL1403) (Streptococcus lactis) protein is Heme chaperone HemW.